The sequence spans 192 residues: Imidazoleglycerol-phosphate dehydratase (192 aa).

Belongs to the imidazoleglycerol-phosphate dehydratase family.

The protein localises to the cytoplasm. It carries out the reaction D-erythro-1-(imidazol-4-yl)glycerol 3-phosphate = 3-(imidazol-4-yl)-2-oxopropyl phosphate + H2O. The protein operates within amino-acid biosynthesis; L-histidine biosynthesis; L-histidine from 5-phospho-alpha-D-ribose 1-diphosphate: step 6/9. This is Imidazoleglycerol-phosphate dehydratase from Staphylococcus aureus (strain MRSA252).